The sequence spans 260 residues: UPF0758 protein Smed_1459 (260 aa).

In terms of domain architecture, MPN spans 138 to 260 (VLSSWSAVID…HVSLKGLQLF (123 aa)). 3 residues coordinate Zn(2+): H209, H211, and D222. A JAMM motif motif is present at residues 209 to 222 (HNHPSGDPTPSCAD).

Belongs to the UPF0758 family.

The polypeptide is UPF0758 protein Smed_1459 (Sinorhizobium medicae (strain WSM419) (Ensifer medicae)).